Reading from the N-terminus, the 198-residue chain is Recombination protein RecR (198 aa).

Residues 57–72 (CTICGHITDTDPCYIC) form a C4-type zinc finger. One can recognise a Toprim domain in the interval 80-175 (TTICVVQDPK…KVTRIAHGLP (96 aa)).

Belongs to the RecR family.

Its function is as follows. May play a role in DNA repair. It seems to be involved in an RecBC-independent recombinational process of DNA repair. It may act with RecF and RecO. The protein is Recombination protein RecR of Geobacillus kaustophilus (strain HTA426).